The primary structure comprises 205 residues: High frequency lysogenization protein HflD homolog (205 aa).

This sequence belongs to the HflD family.

It is found in the cytoplasm. The protein resides in the cell inner membrane. The polypeptide is High frequency lysogenization protein HflD homolog (Shewanella halifaxensis (strain HAW-EB4)).